We begin with the raw amino-acid sequence, 129 residues long: Small ribosomal subunit protein uS11 (129 aa).

Belongs to the universal ribosomal protein uS11 family. In terms of assembly, part of the 30S ribosomal subunit. Interacts with proteins S7 and S18. Binds to IF-3.

Its function is as follows. Located on the platform of the 30S subunit, it bridges several disparate RNA helices of the 16S rRNA. Forms part of the Shine-Dalgarno cleft in the 70S ribosome. This is Small ribosomal subunit protein uS11 from Lactobacillus delbrueckii subsp. bulgaricus (strain ATCC 11842 / DSM 20081 / BCRC 10696 / JCM 1002 / NBRC 13953 / NCIMB 11778 / NCTC 12712 / WDCM 00102 / Lb 14).